Reading from the N-terminus, the 370-residue chain is Holliday junction branch migration complex subunit RuvB (370 aa).

Residues 1–182 are large ATPase domain (RuvB-L); that stretch reads MDERMMTSAK…FGVIHRLEYY (182 aa). ATP is bound by residues Leu-21, Arg-22, Gly-63, Lys-66, Thr-67, Thr-68, 129-131, Arg-172, Tyr-182, and Arg-219; that span reads EDF. Residue Thr-67 coordinates Mg(2+). Residues 183–253 form a small ATPAse domain (RuvB-S) region; that stretch reads RPDELEFIIL…VAREALRRLE (71 aa). Residues 256–370 form a head domain (RuvB-H) region; sequence PRGLDTTDQR…AEQAALSFDE (115 aa). The DNA site is built by Arg-311 and Arg-316.

The protein belongs to the RuvB family. Homohexamer. Forms an RuvA(8)-RuvB(12)-Holliday junction (HJ) complex. HJ DNA is sandwiched between 2 RuvA tetramers; dsDNA enters through RuvA and exits via RuvB. An RuvB hexamer assembles on each DNA strand where it exits the tetramer. Each RuvB hexamer is contacted by two RuvA subunits (via domain III) on 2 adjacent RuvB subunits; this complex drives branch migration. In the full resolvosome a probable DNA-RuvA(4)-RuvB(12)-RuvC(2) complex forms which resolves the HJ.

The protein localises to the cytoplasm. The enzyme catalyses ATP + H2O = ADP + phosphate + H(+). Its function is as follows. The RuvA-RuvB-RuvC complex processes Holliday junction (HJ) DNA during genetic recombination and DNA repair, while the RuvA-RuvB complex plays an important role in the rescue of blocked DNA replication forks via replication fork reversal (RFR). RuvA specifically binds to HJ cruciform DNA, conferring on it an open structure. The RuvB hexamer acts as an ATP-dependent pump, pulling dsDNA into and through the RuvAB complex. RuvB forms 2 homohexamers on either side of HJ DNA bound by 1 or 2 RuvA tetramers; 4 subunits per hexamer contact DNA at a time. Coordinated motions by a converter formed by DNA-disengaged RuvB subunits stimulates ATP hydrolysis and nucleotide exchange. Immobilization of the converter enables RuvB to convert the ATP-contained energy into a lever motion, pulling 2 nucleotides of DNA out of the RuvA tetramer per ATP hydrolyzed, thus driving DNA branch migration. The RuvB motors rotate together with the DNA substrate, which together with the progressing nucleotide cycle form the mechanistic basis for DNA recombination by continuous HJ branch migration. Branch migration allows RuvC to scan DNA until it finds its consensus sequence, where it cleaves and resolves cruciform DNA. The sequence is that of Holliday junction branch migration complex subunit RuvB from Heliobacterium modesticaldum (strain ATCC 51547 / Ice1).